The primary structure comprises 240 residues: Orotidine 5'-phosphate decarboxylase (240 aa).

Residues D15, K37, 64 to 73 (DLKYHDIPNT), T127, R188, Q197, G217, and R218 each bind substrate. The Proton donor role is filled by K66.

It belongs to the OMP decarboxylase family. Type 1 subfamily. As to quaternary structure, homodimer.

It catalyses the reaction orotidine 5'-phosphate + H(+) = UMP + CO2. Its pathway is pyrimidine metabolism; UMP biosynthesis via de novo pathway; UMP from orotate: step 2/2. Its function is as follows. Catalyzes the decarboxylation of orotidine 5'-monophosphate (OMP) to uridine 5'-monophosphate (UMP). This chain is Orotidine 5'-phosphate decarboxylase, found in Geobacter sp. (strain M21).